A 962-amino-acid chain; its full sequence is Leucine--tRNA ligase (962 aa).

Positions 40-51 (PYPSGAGLHVGH) match the 'HIGH' region motif. The segment at 548–570 (SRKLSGQHDEPNSNVTPSAVEGS) is disordered. A 'KMSKS' region motif is present at residues 737–741 (KMSKS). Lysine 740 serves as a coordination point for ATP.

Belongs to the class-I aminoacyl-tRNA synthetase family.

Its subcellular location is the cytoplasm. It catalyses the reaction tRNA(Leu) + L-leucine + ATP = L-leucyl-tRNA(Leu) + AMP + diphosphate. The chain is Leucine--tRNA ligase from Christiangramia forsetii (strain DSM 17595 / CGMCC 1.15422 / KT0803) (Gramella forsetii).